The following is a 365-amino-acid chain: 3-dehydroquinate synthase (365 aa).

NAD(+) contacts are provided by residues 106–110, 130–131, Lys-142, Lys-151, and 169–172; these read GVIGD, TT, and FFAT. Glu-184, His-247, and His-264 together coordinate Zn(2+).

This sequence belongs to the sugar phosphate cyclases superfamily. Dehydroquinate synthase family. The cofactor is Co(2+). It depends on Zn(2+) as a cofactor. NAD(+) serves as cofactor.

Its subcellular location is the cytoplasm. It catalyses the reaction 7-phospho-2-dehydro-3-deoxy-D-arabino-heptonate = 3-dehydroquinate + phosphate. The protein operates within metabolic intermediate biosynthesis; chorismate biosynthesis; chorismate from D-erythrose 4-phosphate and phosphoenolpyruvate: step 2/7. Catalyzes the conversion of 3-deoxy-D-arabino-heptulosonate 7-phosphate (DAHP) to dehydroquinate (DHQ). This is 3-dehydroquinate synthase from Listeria welshimeri serovar 6b (strain ATCC 35897 / DSM 20650 / CCUG 15529 / CIP 8149 / NCTC 11857 / SLCC 5334 / V8).